The sequence spans 293 residues: Mitochondrial glycine transporter (293 aa).

3 Solcar repeats span residues 6–85 (GGVP…SRSA), 102–186 (LQSY…AKEM), and 208–291 (ASAM…LLKL). Transmembrane regions (helical) follow at residues 12–37 (LVSGFFGGLASVCALQPLDLLKTRLQ), 60–86 (GTLPSALRTSIGSALYLSLLNYSRSAL), 108–133 (LLTGALSRAAVGLVTMPITVIKVRYE), 161–184 (GAAATTLRDAPYAGLYVLLYEQAK), 212–238 (VNGVSAFLSASLATTLTAPFDTIKTRM), and 266–284 (GLSLRLCRKAMSACIAWGI).

Belongs to the mitochondrial carrier (TC 2.A.29) family. SLC25A38 subfamily.

The protein resides in the mitochondrion inner membrane. The catalysed reaction is glycine(in) = glycine(out). In terms of biological role, mitochondrial glycine transporter that imports glycine into the mitochondrial matrix. Plays an important role in providing glycine for the first enzymatic step in heme biosynthesis, the condensation of glycine with succinyl-CoA to produce 5-aminolevulinate (ALA) in the mitochondrial matrix. This Eremothecium gossypii (strain ATCC 10895 / CBS 109.51 / FGSC 9923 / NRRL Y-1056) (Yeast) protein is Mitochondrial glycine transporter.